A 515-amino-acid polypeptide reads, in one-letter code: WUSCHEL-related homeobox 12 (515 aa).

2 stretches are compositionally biased toward polar residues: residues 23 to 32 (QQQPDMNGNG) and 44 to 57 (TAATTGNGKPSLLS). Disordered regions lie at residues 23–76 (QQQP…WNPR), 130–156 (NKLRAAGHHHHHGRAAALPRASAPPST), and 176–195 (LLAATSSSSSSSDRSSGSSK). Over residues 62–71 (EGTRNPEPKP) the composition is skewed to basic and acidic residues. A DNA-binding region (homeobox; WUS-type) is located at residues 68–132 (EPKPRWNPRP…NRKSRTKNKL (65 aa)). The span at 130–143 (NKLRAAGHHHHHGR) shows a compositional bias: basic residues. Low complexity-rich tracts occupy residues 144-156 (AAALPRASAPPST) and 177-195 (LAATSSSSSSSDRSSGSSK).

It belongs to the WUS homeobox family.

The protein localises to the nucleus. Its function is as follows. Transcription factor which may be involved in developmental processes. The protein is WUSCHEL-related homeobox 12 (WOX12) of Oryza sativa subsp. japonica (Rice).